The sequence spans 215 residues: NADH-quinone oxidoreductase subunit C (215 aa).

This sequence belongs to the complex I 30 kDa subunit family. In terms of assembly, NDH-1 is composed of 14 different subunits. Subunits NuoB, C, D, E, F, and G constitute the peripheral sector of the complex.

The protein localises to the cell inner membrane. The enzyme catalyses a quinone + NADH + 5 H(+)(in) = a quinol + NAD(+) + 4 H(+)(out). In terms of biological role, NDH-1 shuttles electrons from NADH, via FMN and iron-sulfur (Fe-S) centers, to quinones in the respiratory chain. The immediate electron acceptor for the enzyme in this species is believed to be ubiquinone. Couples the redox reaction to proton translocation (for every two electrons transferred, four hydrogen ions are translocated across the cytoplasmic membrane), and thus conserves the redox energy in a proton gradient. This Methylobacterium radiotolerans (strain ATCC 27329 / DSM 1819 / JCM 2831 / NBRC 15690 / NCIMB 10815 / 0-1) protein is NADH-quinone oxidoreductase subunit C.